A 231-amino-acid polypeptide reads, in one-letter code: Acyl-protein thioesterase 2 (231 aa).

A lipid anchor (S-palmitoyl cysteine) is attached at C2. The residue at position 82 (S82) is a Phosphoserine. Residues S122, D176, and H210 each act as charge relay system in the active site.

The protein belongs to the AB hydrolase superfamily. AB hydrolase 2 family.

The protein resides in the cytoplasm. The enzyme catalyses S-hexadecanoyl-L-cysteinyl-[protein] + H2O = L-cysteinyl-[protein] + hexadecanoate + H(+). The catalysed reaction is prostaglandin E2 1-glyceryl ester + H2O = prostaglandin E2 + glycerol + H(+). It catalyses the reaction 1-hexadecanoyl-sn-glycero-3-phosphocholine + H2O = sn-glycerol 3-phosphocholine + hexadecanoate + H(+). It carries out the reaction 1-octadecanoyl-sn-glycero-3-phosphocholine + H2O = octadecanoate + sn-glycerol 3-phosphocholine + H(+). The enzyme catalyses 1-hexadecanoyl-sn-glycero-3-phosphate + H2O = sn-glycerol 3-phosphate + hexadecanoate + H(+). The catalysed reaction is 1-hexadecanoyl-sn-glycero-3-phospho-L-serine + H2O = sn-glycero-3-phospho-L-serine + hexadecanoate + H(+). Acts as an acyl-protein thioesterase hydrolyzing fatty acids from S-acylated cysteine residues in proteins such as trimeric G alpha proteins, GSDMD, GAP43, ZDHHC6 or HRAS. Deacylates GAP43. Mediates depalmitoylation of ZDHHC6. Has lysophospholipase activity. Hydrolyzes prostaglandin glycerol esters (PG-Gs) in the following order prostaglandin D2-glycerol ester (PGD2-G) &gt; prostaglandin E2 glycerol ester (PGE2-G) &gt; prostaglandin F2-alpha-glycerol ester (PGF2-alpha-G). Hydrolyzes 1-arachidonoylglycerol but not 2-arachidonoylglycerol or arachidonoylethanolamide. This chain is Acyl-protein thioesterase 2 (Lypla2), found in Rattus norvegicus (Rat).